The primary structure comprises 699 residues: Osmotic avoidance abnormal protein 3 (699 aa).

The Kinesin motor domain occupies 4–327; sequence SVRVAVRCRP…LRYANRAKNI (324 aa). Residue 87–94 participates in ATP binding; that stretch reads GQTGSGKT. Residues 339–523 are a coiled coil; sequence DALLREYQEE…EIEDLHGEFE (185 aa).

The protein belongs to the TRAFAC class myosin-kinesin ATPase superfamily. Kinesin family. Kinesin II subfamily. As to expression, expressed in an exclusive set of 26 chemosensory neurons whose dendritic endings are exposed to the external environment; six IL2 neurons of the inner labial sensilla, 8 pairs of amphid neurons in the head, and 2 pairs of phasmid neurons in the tail.

The protein localises to the cytoplasm. It localises to the cytoskeleton. It is found in the cell projection. Its subcellular location is the cilium. The protein resides in the cilium axoneme. The protein localises to the cilium basal body. Its function is as follows. Kinesin motor protein which is required for the anterograde intraflagellar transport (IFT) along the middle segment of the sensory neuron cilia together with the kinesin II motor complex (composed of klp-11, klp-20 and kap-1) and on its own, is required for IFT along the distal segment. In addition, regulates the length of cilia. May have a role during neurogenesis and axonal transport. This Caenorhabditis elegans protein is Osmotic avoidance abnormal protein 3.